The primary structure comprises 141 residues: Ubiquitin-like protein ATG12 (141 aa).

The interval 24–54 is disordered; the sequence is LELSPETAIPEPPSSVAVSPGTEEPPGDTKK. G141 participates in a covalent cross-link: Glycyl lysine isopeptide (Gly-Lys) (interchain with K-? in acceptor protein).

This sequence belongs to the ATG12 family. Forms a conjugate with ATG5. Part of the minor complex composed of 4 sets of ATG12-ATG5 and ATG16L1 (400 kDa); this complex interacts with ATG3 leading to disruption of ATG7 interaction and promotion of ATG8-like proteins lipidation. Forms an 800-kDa complex composed of ATG12-ATG5 and ATG16L2. Interacts with DHX58/RIG-1, IFIH1/MDA5 and MAVS/IPS-1 in monomeric form as well as in ATG12-ATG5 conjugate. The interaction with MAVS is further enhanced upon vesicular stomatitis virus (VSV) infection. Interacts with ATG3; this interaction is essential for phosphatidylethanolamine (PE)-conjugated ATG8-like proteins formation. Interacts with ATG7. Interacts with ATG10. The ATG12-ATG5 conjugate interacts with RAB33A; this interaction is bridged by ATG16L1 and promotes ATG12-ATG5-ATG16L1 complex recruitment to phagophores. Interacts with TECPR1. Interacts with SH3BGRL. The ATG12-ATG5 conjugate interacts with PDCD6IP (via the BRO1 domain); this interaction is bridged by ATG12 and promotes multiple PDCD6IP-mediated functions such as endolysosomal trafficking, macroautophagy and exosome biogenesis. In terms of processing, acetylated by EP300.

It is found in the cytoplasm. It localises to the preautophagosomal structure membrane. Its function is as follows. Ubiquitin-like protein involved in autophagy vesicles formation. Conjugation with ATG5 through a ubiquitin-like conjugating system involving also ATG7 as an E1-like activating enzyme and ATG10 as an E2-like conjugating enzyme, is essential for its function. The ATG12-ATG5 conjugate acts as an E3-like enzyme which is required for lipidation of ATG8 family proteins and their association to the vesicle membranes. The ATG12-ATG5 conjugate also negatively regulates the innate antiviral immune response by blocking the type I IFN production pathway through direct association with RARRES3 and MAVS. Also plays a role in translation or delivery of incoming viral RNA to the translation apparatus. As part of the ATG8 conjugation system with ATG5 and ATG16L1, required for recruitment of LRRK2 to stressed lysosomes and induction of LRRK2 kinase activity in response to lysosomal stress. This chain is Ubiquitin-like protein ATG12, found in Rattus norvegicus (Rat).